The primary structure comprises 96 residues: Protein YdfX (96 aa).

The protein is Protein YdfX (ydfX) of Escherichia coli (strain K12).